The following is a 345-amino-acid chain: Nicotinate-nucleotide--dimethylbenzimidazole phosphoribosyltransferase (345 aa).

The active-site Proton acceptor is glutamate 312.

This sequence belongs to the CobT family.

It carries out the reaction 5,6-dimethylbenzimidazole + nicotinate beta-D-ribonucleotide = alpha-ribazole 5'-phosphate + nicotinate + H(+). The protein operates within nucleoside biosynthesis; alpha-ribazole biosynthesis; alpha-ribazole from 5,6-dimethylbenzimidazole: step 1/2. Functionally, catalyzes the synthesis of alpha-ribazole-5'-phosphate from nicotinate mononucleotide (NAMN) and 5,6-dimethylbenzimidazole (DMB). The sequence is that of Nicotinate-nucleotide--dimethylbenzimidazole phosphoribosyltransferase from Bacteroides fragilis (strain YCH46).